We begin with the raw amino-acid sequence, 389 residues long: MKIHEYQGKEILRKFGVAVPRGKPVFSVDDAVKAAEELGGPVWVVKAQIHAGGRGKGGGVKVAKSLEQVREYANQILGMQLVTHQTGPEGQKVNRLLIEEGADIKKELYVGLVIDRVSQKIVVMASSEGGMDVEEVAEKTPELIHKIAVDPATGLKDAEADELATKIGVPAASLPQARAILQGLYKAFWETDASLAEINPLILTGDGKVIALDAKFNFDSNALFRHPEIVAYRDLDEEDPAEVEASKFDLAYISLDGNIGCLVNGAGLAMATMDTIKLFGGEPANFLDVGGGATTEKVTEAFKIMLKNPNLTAILVNIFGGIMRCDVIAEGVIAASKAVSLKVPLVVRMKGTNEDLGKKMLAESGLPIIAADSMEEAAQKVVAAASGKA.

An ATP-grasp domain is found at Lys9–Glu244. Residues Lys46, Gly53–Gly55, Glu99, Ala102, and Glu107 contribute to the ATP site. 2 residues coordinate Mg(2+): Asn199 and Asp213. Substrate contacts are provided by residues Asn264 and Gly321–Met323.

Belongs to the succinate/malate CoA ligase beta subunit family. In terms of assembly, heterotetramer of two alpha and two beta subunits. The cofactor is Mg(2+).

The enzyme catalyses succinate + ATP + CoA = succinyl-CoA + ADP + phosphate. It carries out the reaction GTP + succinate + CoA = succinyl-CoA + GDP + phosphate. It participates in carbohydrate metabolism; tricarboxylic acid cycle; succinate from succinyl-CoA (ligase route): step 1/1. Succinyl-CoA synthetase functions in the citric acid cycle (TCA), coupling the hydrolysis of succinyl-CoA to the synthesis of either ATP or GTP and thus represents the only step of substrate-level phosphorylation in the TCA. The beta subunit provides nucleotide specificity of the enzyme and binds the substrate succinate, while the binding sites for coenzyme A and phosphate are found in the alpha subunit. The protein is Succinate--CoA ligase [ADP-forming] subunit beta of Paraburkholderia xenovorans (strain LB400).